The chain runs to 398 residues: tRNA-specific 2-thiouridylase MnmA (398 aa).

Residues 18 to 25 (AMSGGVDS) and Leu-44 contribute to the ATP site. Residue Cys-112 is the Nucleophile of the active site. Cys-112 and Cys-213 are oxidised to a cystine. Residue Gly-136 participates in ATP binding. The interval 163 to 165 (RDQ) is interaction with tRNA. Cys-213 serves as the catalytic Cysteine persulfide intermediate.

The protein belongs to the MnmA/TRMU family.

It is found in the cytoplasm. It catalyses the reaction S-sulfanyl-L-cysteinyl-[protein] + uridine(34) in tRNA + AH2 + ATP = 2-thiouridine(34) in tRNA + L-cysteinyl-[protein] + A + AMP + diphosphate + H(+). Catalyzes the 2-thiolation of uridine at the wobble position (U34) of tRNA, leading to the formation of s(2)U34. The chain is tRNA-specific 2-thiouridylase MnmA from Sinorhizobium medicae (strain WSM419) (Ensifer medicae).